The chain runs to 129 residues: MFARDLAECEKTERRVVSPDGNWESTRLLLKEDNMGFSFHITTIYEGKDFDMHYQNHLESVYCISGEGEVESRETGQKHHIKPGVVYVLDKHDAHTLRAFKELKLACVFNPPITGKEVHNSEGAYEILE.

It belongs to the ectoine synthase family.

It carries out the reaction (2S)-4-acetamido-2-aminobutanoate = L-ectoine + H2O. It functions in the pathway amine and polyamine biosynthesis; ectoine biosynthesis; L-ectoine from L-aspartate 4-semialdehyde: step 3/3. In terms of biological role, catalyzes the circularization of gamma-N-acetyl-alpha,gamma-diaminobutyric acid (ADABA) to ectoine (1,4,5,6-tetrahydro-2-methyl-4-pyrimidine carboxylic acid), which is an excellent osmoprotectant. The chain is L-ectoine synthase from Marinomonas sp. (strain MWYL1).